The primary structure comprises 401 residues: Argininosuccinate synthase (401 aa).

Residues 7-15 (AYSGGLDTS) and Ala34 contribute to the ATP site. L-citrulline contacts are provided by Tyr85 and Ser90. Position 115 (Gly115) interacts with ATP. L-aspartate is bound by residues Thr117, Asn121, and Asp122. Asn121 serves as a coordination point for L-citrulline. L-citrulline-binding residues include Arg125, Ser174, Ser183, Glu259, and Tyr271.

The protein belongs to the argininosuccinate synthase family. Type 1 subfamily. In terms of assembly, homotetramer.

The protein localises to the cytoplasm. The catalysed reaction is L-citrulline + L-aspartate + ATP = 2-(N(omega)-L-arginino)succinate + AMP + diphosphate + H(+). Its pathway is amino-acid biosynthesis; L-arginine biosynthesis; L-arginine from L-ornithine and carbamoyl phosphate: step 2/3. The polypeptide is Argininosuccinate synthase (Pelotomaculum thermopropionicum (strain DSM 13744 / JCM 10971 / SI)).